The chain runs to 594 residues: MLYRPKIYTNYNIINGGTKSRLSSACYPIQCAVVNSSNAIIDRRSANFEPSIWSFDYIQSLTSQYKGEPYTSRVKKLERDVKKILVEMENSLAQLELIDTLQRLGISYRFENEINSILNKKYVNINNPNYNLYAIALEFRLLRQHGYAVPQEIFNQLKNEIENIKKNINGNDIMGILALYEASFYEKKCESILKEARIFTTECLKNYTIMISEQKKLMIDNDYDYDIEVVNHALELPLHRRTTRTEAKWFIDAYAKKQDMNPMLLELAKLDFNIVQSTHHEDLKHIFRWWRHTKLGEKLNFARDRLMECFLWNIGIRFESKFSYFRTKTAKLFELVTFIDDIYDVYGTLDELELFTKAVERWDVKMINELPEYMKMPYLVLHNTINDMVFEVLRDQEISINIQYLKKTWVDMCKSFLQEAKWYYSGYTPTLEEYIENGWISVGAPVILVHAYFFHANNNRTITNTKEIFECLEYGYYPAIIRHSAIILRFTNDLATSSEELKRGDAPTSIQCYMQEKIVSEEEAREHIKFLINEAWKEMNNDVGLYPISLTEDATNFAKMGFFIYQHGDGHSSQDNQSKQKISSLIIEPIPLYT.

Residues arginine 303, aspartate 340, aspartate 344, arginine 489, and asparagine 492 each coordinate (2E)-geranyl diphosphate. Mg(2+)-binding residues include aspartate 340 and aspartate 344. The DDXXD motif motif lies at 340–344 (DDIYD). The Mg(2+) site is built by asparagine 492, threonine 496, and glutamate 500.

It belongs to the terpene synthase family. Tpsb subfamily. Mg(2+) serves as cofactor. It depends on Mn(2+) as a cofactor. In terms of tissue distribution, expressed in glandular trichomes two to four weeks after flowering onset.

It carries out the reaction (2E)-geranyl diphosphate = (E)-beta-ocimene + diphosphate. The catalysed reaction is (2E)-geranyl diphosphate = (Z)-beta-ocimene + diphosphate. The protein operates within secondary metabolite biosynthesis; terpenoid biosynthesis. Functionally, involved in monoterpene (C10) olefins biosynthesis, constituants of cannabinoids and terpenoids-rich resins. Catalyzes mainly the conversion of (2E)-geranyl diphosphate to (E)-beta-ocimene, and also produces minor products such as (Z)-beta-ocimene. In Cannabis sativa (Hemp), this protein is (E)-beta-ocimene synthase TPS6FN.